Reading from the N-terminus, the 155-residue chain is Ribosomal RNA large subunit methyltransferase H (155 aa).

S-adenosyl-L-methionine is bound by residues Leu73, Gly104, and 123-128; that span reads LSPLTL.

This sequence belongs to the RNA methyltransferase RlmH family. In terms of assembly, homodimer.

The protein resides in the cytoplasm. It carries out the reaction pseudouridine(1915) in 23S rRNA + S-adenosyl-L-methionine = N(3)-methylpseudouridine(1915) in 23S rRNA + S-adenosyl-L-homocysteine + H(+). Specifically methylates the pseudouridine at position 1915 (m3Psi1915) in 23S rRNA. This chain is Ribosomal RNA large subunit methyltransferase H, found in Pseudomonas putida (strain ATCC 700007 / DSM 6899 / JCM 31910 / BCRC 17059 / LMG 24140 / F1).